A 284-amino-acid chain; its full sequence is MEMO1 family protein MMP1387 (284 aa).

The protein belongs to the MEMO1 family.

The chain is MEMO1 family protein MMP1387 from Methanococcus maripaludis (strain DSM 14266 / JCM 13030 / NBRC 101832 / S2 / LL).